Consider the following 265-residue polypeptide: 14-3-3-like protein GF14-D (265 aa).

Residues 244-265 (DANDDGGDEIKEAAAPKEPGDQ) form a disordered region. Positions 251–265 (DEIKEAAAPKEPGDQ) are enriched in basic and acidic residues.

Belongs to the 14-3-3 family. As to quaternary structure, interacts with BZR1. Interacts with ABI5.

In terms of biological role, is associated with a DNA binding complex that binds to the G box, a well-characterized cis-acting DNA regulatory element found in plant genes. This Oryza sativa subsp. japonica (Rice) protein is 14-3-3-like protein GF14-D (GF14D).